The following is a 102-amino-acid chain: Small ribosomal subunit protein uS10 (102 aa).

This sequence belongs to the universal ribosomal protein uS10 family. As to quaternary structure, part of the 30S ribosomal subunit.

Functionally, involved in the binding of tRNA to the ribosomes. This Methylobacillus flagellatus (strain ATCC 51484 / DSM 6875 / VKM B-1610 / KT) protein is Small ribosomal subunit protein uS10.